Consider the following 176-residue polypeptide: Flavodoxin 1 (176 aa).

One can recognise a Flavodoxin-like domain in the interval 4–165 (TGIFFGSDTG…RVEKWVKQVS (162 aa)).

This sequence belongs to the flavodoxin family. It depends on FMN as a cofactor.

Its function is as follows. Low-potential electron donor to a number of redox enzymes (Potential). Involved in the reactivation of inactive cob(II)alamin in methionine synthase. This chain is Flavodoxin 1 (fldA), found in Salmonella typhimurium (strain LT2 / SGSC1412 / ATCC 700720).